The following is a 767-amino-acid chain: Lysyl oxidase homolog 2 (767 aa).

A signal peptide spans 1–19 (MLVTHIFLLTLSLSVPTLG). SRCR domains are found at residues 51 to 152 (VRLA…VQCS), 181 to 295 (IRAI…VSCT), 319 to 418 (VRLR…VRCN), and 428 to 537 (VRLS…VSCV). Intrachain disulfides connect Cys-77/Cys-141, Cys-90/Cys-151, Cys-121/Cys-131, Cys-211/Cys-284, Cys-224/Cys-294, Cys-258/Cys-268, Cys-344/Cys-407, Cys-357/Cys-417, and Cys-388/Cys-398. Residue Asn-281 is glycosylated (N-linked (GlcNAc...) asparagine). A glycan (N-linked (GlcNAc...) asparagine) is linked at Asn-448. 3 disulfide bridges follow: Cys-457–Cys-523, Cys-470–Cys-536, and Cys-504–Cys-514. The interval 541–744 (PDLVLNAALV…WMYNCHIGGS (204 aa)) is lysyl-oxidase like. Residues Asp-542 and Leu-543 each contribute to the Ca(2+) site. 4 cysteine pairs are disulfide-bonded: Cys-566–Cys-618, Cys-572–Cys-688, Cys-650–Cys-666, and Cys-656–Cys-678. Residues His-619, His-621, and His-623 each coordinate Cu cation. Asn-637 carries an N-linked (GlcNAc...) asparagine glycan. A cross-link (lysine tyrosylquinone (Lys-Tyr)) is located at residues 646 to 682 (KASFCLEDSECETDVQKQYACANFGEQGITVGCWDVY). Tyr-682 carries the post-translational modification 2',4',5'-topaquinone. Ca(2+)-binding residues include Glu-715, Asp-717, Asn-720, and Asn-721. A disulfide bridge links Cys-725 with Cys-739.

The protein belongs to the lysyl oxidase family. It depends on Cu cation as a cofactor. Lysine tyrosylquinone residue serves as cofactor. The lysine tyrosylquinone cross-link (LTQ) is generated by condensation of the epsilon-amino group of a lysine with a topaquinone produced by oxidation of tyrosine.

Its subcellular location is the secreted. The protein localises to the extracellular space. It localises to the extracellular matrix. The protein resides in the basement membrane. It is found in the nucleus. Its subcellular location is the chromosome. The protein localises to the endoplasmic reticulum. It catalyses the reaction L-lysyl-[protein] + O2 + H2O = (S)-2-amino-6-oxohexanoyl-[protein] + H2O2 + NH4(+). In terms of biological role, mediates the post-translational oxidative deamination of lysine residues on target proteins leading to the formation of deaminated lysine (allysine). Acts as a transcription corepressor and specifically mediates deamination of trimethylated 'Lys-4' of histone H3 (H3K4me3), a specific tag for epigenetic transcriptional activation. Shows no activity against histone H3 when it is trimethylated on 'Lys-9' (H3K9me3) or 'Lys-27' (H3K27me3) or when 'Lys-4' is monomethylated (H3K4me1) or dimethylated (H3K4me2). Also mediates deamination of methylated TAF10, a member of the transcription factor IID (TFIID) complex, which induces release of TAF10 from promoters, leading to inhibition of TFIID-dependent transcription. LOXL2-mediated deamination of TAF10 results in transcriptional repression of genes required for embryonic stem cell pluripotency. Involved in epithelial to mesenchymal transition (EMT) and participates in repression of E-cadherin, probably by mediating deamination of histone H3. When secreted into the extracellular matrix, promotes cross-linking of extracellular matrix proteins by mediating oxidative deamination of peptidyl lysine residues in precursors to fibrous collagen and elastin. Acts as a regulator of sprouting angiogenesis, probably via collagen IV scaffolding. Acts as a regulator of chondrocyte differentiation, probably by regulating expression of factors that control chondrocyte differentiation. This Xenopus tropicalis (Western clawed frog) protein is Lysyl oxidase homolog 2 (loxl2).